Here is a 343-residue protein sequence, read N- to C-terminus: Peptide methionine sulfoxide reductase msrA/msrB (343 aa).

The tract at residues 21–174 (KVIYLAGGCF…PNGYCHIDLK (154 aa)) is peptide methionine sulfoxide reductase A. Catalysis depends on Cys-29, which acts as the Cysteine sulfenic acid (-SOH) intermediate. The 124-residue stretch at 191–314 (DEVLKKKLTQ…NSASLRFIPL (124 aa)) folds into the MsrB domain. Cys-303 (nucleophile) is an active-site residue.

In the N-terminal section; belongs to the MsrA Met sulfoxide reductase family. The protein in the C-terminal section; belongs to the MsrB Met sulfoxide reductase family.

The enzyme catalyses L-methionyl-[protein] + [thioredoxin]-disulfide + H2O = L-methionyl-(S)-S-oxide-[protein] + [thioredoxin]-dithiol. It carries out the reaction [thioredoxin]-disulfide + L-methionine + H2O = L-methionine (S)-S-oxide + [thioredoxin]-dithiol. The catalysed reaction is L-methionyl-[protein] + [thioredoxin]-disulfide + H2O = L-methionyl-(R)-S-oxide-[protein] + [thioredoxin]-dithiol. In terms of biological role, has an important function as a repair enzyme for proteins that have been inactivated by oxidation. Catalyzes the reversible oxidation-reduction of methionine sulfoxide in proteins to methionine. The protein is Peptide methionine sulfoxide reductase msrA/msrB of Enterococcus faecalis (Streptococcus faecalis).